The sequence spans 467 residues: Uronate isomerase (467 aa).

Belongs to the metallo-dependent hydrolases superfamily. Uronate isomerase family.

The catalysed reaction is D-glucuronate = D-fructuronate. It carries out the reaction aldehydo-D-galacturonate = keto-D-tagaturonate. It functions in the pathway carbohydrate metabolism; pentose and glucuronate interconversion. The chain is Uronate isomerase from Clostridium acetobutylicum (strain ATCC 824 / DSM 792 / JCM 1419 / IAM 19013 / LMG 5710 / NBRC 13948 / NRRL B-527 / VKM B-1787 / 2291 / W).